The primary structure comprises 129 residues: Type II secretion system protein I (129 aa).

Positions 1 to 6 are cleaved as a propeptide — leader sequence; it reads MKRARG. An N-methylphenylalanine modification is found at phenylalanine 7. A helical transmembrane segment spans residues 7–27; sequence FTLLEVLVALAIFAMVAASVL.

The protein belongs to the GSP I family. As to quaternary structure, type II secretion is composed of four main components: the outer membrane complex, the inner membrane complex, the cytoplasmic secretion ATPase and the periplasm-spanning pseudopilus. Forms the tip of the type II pseudopilus by interacting with XcpU, XcpW and XcpX. Interacts with core component XcpT. Cleaved by prepilin peptidase. In terms of processing, methylated by prepilin peptidase at the amino group of the N-terminal phenylalanine once the leader sequence is cleaved by prepilin peptidase.

Its subcellular location is the cell inner membrane. In terms of biological role, component of the type II secretion system required for the energy-dependent secretion of extracellular factors such as proteases and toxins from the periplasm. Part of the pseudopilus tip complex that is critical for the recognition and binding of secretion substrates. Type II pseudopilus confers increased bacterial adhesive capabilities. This Pseudomonas aeruginosa (strain ATCC 15692 / DSM 22644 / CIP 104116 / JCM 14847 / LMG 12228 / 1C / PRS 101 / PAO1) protein is Type II secretion system protein I (xcpV).